Consider the following 98-residue polypeptide: UPF0175 protein VNG_0066H (98 aa).

The protein belongs to the UPF0175 family.

The protein is UPF0175 protein VNG_0066H of Halobacterium salinarum (strain ATCC 700922 / JCM 11081 / NRC-1) (Halobacterium halobium).